Here is a 1330-residue protein sequence, read N- to C-terminus: Ubinuclein-2 (1330 aa).

Positions 1-113 are disordered; sequence MAEPRRVAFI…PPPRPPKETV (113 aa). Serine 13 bears the Phosphoserine mark. Composition is skewed to basic and acidic residues over residues 16 to 31 and 55 to 67; these read RRRE…EPPR and ARDK…EVSR. Positions 81–96 are enriched in pro residues; that stretch reads PEPPPPPLPLQTPPPR. Phosphothreonine is present on threonine 229. Serine 236 carries the phosphoserine modification. Disordered stretches follow at residues 236–304 and 322–345; these read SDTE…KKRY and DALK…PKPP. A Phosphothreonine modification is found at threonine 238. A Glycyl lysine isopeptide (Lys-Gly) (interchain with G-Cter in SUMO2) cross-link involves residue lysine 258. Phosphoserine is present on serine 297. Residues serine 402, serine 405, serine 408, and serine 570 each carry the phosphoserine modification. Disordered regions lie at residues 559–583, 767–789, 801–835, 866–909, 964–991, 1021–1202, and 1292–1330; these read LQAD…KRVI, NKGP…GLRE, LATP…DLAH, GLQR…SLTQ, YRLP…APST, PKLA…SSVV, and PGTQ…RKPQ. Residues 560 to 570 are compositionally biased toward basic and acidic residues; the sequence is QADEEREKNGS. 2 stretches are compositionally biased toward polar residues: residues 767 to 780 and 809 to 818; these read NKGP…NVPT and SPQTAHSSSL. Over residues 866-895 the composition is skewed to low complexity; it reads GLQRSSQIHASSSQTHVSSSQAQAAASSHA. 2 stretches are compositionally biased toward polar residues: residues 899-909 and 969-980; these read SEAQDASSLTQ and STPSPGNGSQGS. Pro residues predominate over residues 1030–1044; the sequence is ATSPKPLTSPKPSVS. Positions 1045–1056 are enriched in low complexity; sequence PKPSLSAKPSVS. Position 1052 is an N6-acetyllysine (lysine 1052). 3 stretches are compositionally biased toward polar residues: residues 1073–1148, 1158–1169, and 1308–1317; these read PSSS…NSLS, RGSNLNSSGANR, and HLQQAFNDGG. Serine 1107 carries the post-translational modification Phosphoserine. At lysine 1132 the chain carries N6-acetyllysine. Residues 1321 to 1330 are compositionally biased toward basic and acidic residues; it reads GDTKLPRKPQ.

It belongs to the ubinuclein family.

The protein is Ubinuclein-2 (Ubn2) of Rattus norvegicus (Rat).